Here is a 481-residue protein sequence, read N- to C-terminus: METMPNWLMQRAFLTPDRTAIEIEEEKVTFMQLHEKVVSVCGNLTHVGVKRGQKVAVLMKNGMEMITVIHALSYVGAVAVLLNTRLSREELLWQMDDAEVICLVTDQDFEAKDIPVYSFAEVMNGPKEEAFIQEEFSLEEAMTIIYTSGTTGKPKGVILTYGNHWASAVGSSLNLGLRDDDCWLACMPMFHVGGLSLLMKNIMYGMRILLVPKYDADFIHKALQTRGVTIISVVSKMLTDLLERLGAETYPSSLRCMLLGGGPAPKPLLETCVEKGIPVYQTYGMTETSSQICTLSADYMLTKVGSAGKPLFQCQLRIEKDGVVVPAFTEGEIVVKGPNVTGGYFNREDATRETIQNGWLHTGDLGYLDEEGFLYVLDRRSDLIISGGENIYPAQIEEVLLSHPAVAEAGVVGMTDDKWGQVPAAFVVKSGEVTEEEILHFCEEKLAKYKVPKKACFLEELPRNASKKLLRRELRQLVEEM.

This sequence belongs to the ATP-dependent AMP-binding enzyme family. MenE subfamily.

The catalysed reaction is 2-succinylbenzoate + ATP + CoA = 2-succinylbenzoyl-CoA + AMP + diphosphate. Its pathway is quinol/quinone metabolism; 1,4-dihydroxy-2-naphthoate biosynthesis; 1,4-dihydroxy-2-naphthoate from chorismate: step 5/7. The protein operates within quinol/quinone metabolism; menaquinone biosynthesis. Functionally, converts 2-succinylbenzoate (OSB) to 2-succinylbenzoyl-CoA (OSB-CoA). In Bacillus cereus (strain Q1), this protein is 2-succinylbenzoate--CoA ligase.